A 622-amino-acid polypeptide reads, in one-letter code: Putative DEAD-box ATP-dependent RNA helicase 44 (622 aa).

Residues 50–97 are disordered; the sequence is DRRSIVQISRSNSDNDDGNRPRDVKRERHRSHDHDRNRESDREFRERE. Positions 66–97 are enriched in basic and acidic residues; the sequence is DGNRPRDVKRERHRSHDHDRNRESDREFRERE. The Helicase ATP-binding domain occupies 241-436; the sequence is IPLGLEQRDV…RKFLRNPVVV (196 aa). 254 to 261 provides a ligand contact to ATP; the sequence is SATGSGKT. The short motif at 367–370 is the DEAD box element; that stretch reads DEAD. Residues 460–606 enclose the Helicase C-terminal domain; that stretch reads RLKKLIDDLG…LVPPELARHE (147 aa).

The protein belongs to the DEAD box helicase family. DDX23/PRP28 subfamily.

It carries out the reaction ATP + H2O = ADP + phosphate + H(+). In Arabidopsis thaliana (Mouse-ear cress), this protein is Putative DEAD-box ATP-dependent RNA helicase 44 (RH44).